A 464-amino-acid polypeptide reads, in one-letter code: Protein FAM90A9 (464 aa).

Disordered stretches follow at residues 1 to 42 (MMAR…DPRL), 70 to 389 (PATL…HDGA), and 411 to 437 (APSFHSPEKPGTFLAQSPHVSEKSEAP). Basic and acidic residues-rich tracts occupy residues 74 to 89 (GKKEGKENLKPWKPRV) and 97 to 114 (NKDKGEKEERPRQQDPQR). Over residues 180-197 (LASLSPLRKASLSSSSSL) the composition is skewed to low complexity.

Belongs to the FAM90 family.

The polypeptide is Protein FAM90A9 (FAM90A9) (Homo sapiens (Human)).